We begin with the raw amino-acid sequence, 180 residues long: NAD(P)H-quinone oxidoreductase subunit I, chloroplastic (180 aa).

4Fe-4S ferredoxin-type domains lie at 55–84 (GRIH…VDWR) and 95–124 (LNYS…MTEE). Positions 64, 67, 70, 74, 104, 107, 110, and 114 each coordinate [4Fe-4S] cluster.

Belongs to the complex I 23 kDa subunit family. As to quaternary structure, NDH is composed of at least 16 different subunits, 5 of which are encoded in the nucleus. It depends on [4Fe-4S] cluster as a cofactor.

The protein localises to the plastid. The protein resides in the chloroplast thylakoid membrane. It catalyses the reaction a plastoquinone + NADH + (n+1) H(+)(in) = a plastoquinol + NAD(+) + n H(+)(out). It carries out the reaction a plastoquinone + NADPH + (n+1) H(+)(in) = a plastoquinol + NADP(+) + n H(+)(out). NDH shuttles electrons from NAD(P)H:plastoquinone, via FMN and iron-sulfur (Fe-S) centers, to quinones in the photosynthetic chain and possibly in a chloroplast respiratory chain. The immediate electron acceptor for the enzyme in this species is believed to be plastoquinone. Couples the redox reaction to proton translocation, and thus conserves the redox energy in a proton gradient. This is NAD(P)H-quinone oxidoreductase subunit I, chloroplastic from Dioscorea elephantipes (Elephant's foot yam).